The sequence spans 417 residues: UDP-N-acetylglucosamine 1-carboxyvinyltransferase (417 aa).

22 to 23 (KN) serves as a coordination point for phosphoenolpyruvate. Position 93 (arginine 93) interacts with UDP-N-acetyl-alpha-D-glucosamine. The active-site Proton donor is cysteine 117. A 2-(S-cysteinyl)pyruvic acid O-phosphothioketal modification is found at cysteine 117. Residues 122 to 126 (RPVDQ), aspartate 304, and isoleucine 326 contribute to the UDP-N-acetyl-alpha-D-glucosamine site.

It belongs to the EPSP synthase family. MurA subfamily.

The protein resides in the cytoplasm. It carries out the reaction phosphoenolpyruvate + UDP-N-acetyl-alpha-D-glucosamine = UDP-N-acetyl-3-O-(1-carboxyvinyl)-alpha-D-glucosamine + phosphate. The protein operates within cell wall biogenesis; peptidoglycan biosynthesis. Its function is as follows. Cell wall formation. Adds enolpyruvyl to UDP-N-acetylglucosamine. The chain is UDP-N-acetylglucosamine 1-carboxyvinyltransferase from Neisseria meningitidis serogroup C (strain 053442).